We begin with the raw amino-acid sequence, 1062 residues long: Exportin-T (1062 aa).

This sequence belongs to the exportin family.

It is found in the nucleus. The protein localises to the cytoplasm. TRNA nucleus export receptor which facilitates tRNA translocation across the nuclear pore complex. Involved in pre-tRNA splicing, probably by affecting the interaction of pre-tRNA with splicing endonuclease. The sequence is that of Exportin-T (LOS1) from Vanderwaltozyma polyspora (strain ATCC 22028 / DSM 70294 / BCRC 21397 / CBS 2163 / NBRC 10782 / NRRL Y-8283 / UCD 57-17) (Kluyveromyces polysporus).